Reading from the N-terminus, the 360-residue chain is sn-glycerol-3-phosphate import ATP-binding protein UgpC (360 aa).

The 232-residue stretch at 4–235 (LSLKGVRKSY…PATTFVASFI (232 aa)) folds into the ABC transporter domain. Position 37 to 44 (37 to 44 (GPSGCGKS)) interacts with ATP.

The protein belongs to the ABC transporter superfamily. sn-glycerol-3-phosphate importer (TC 3.A.1.1.3) family. As to quaternary structure, the complex is composed of two ATP-binding proteins (UgpC), two transmembrane proteins (UgpA and UgpE) and a solute-binding protein (UgpB).

The protein localises to the cell inner membrane. It carries out the reaction sn-glycerol 3-phosphate(out) + ATP + H2O = sn-glycerol 3-phosphate(in) + ADP + phosphate + H(+). Part of the ABC transporter complex UgpBAEC involved in sn-glycerol-3-phosphate (G3P) import. Responsible for energy coupling to the transport system. This is sn-glycerol-3-phosphate import ATP-binding protein UgpC from Burkholderia pseudomallei (strain 1710b).